A 569-amino-acid polypeptide reads, in one-letter code: GATOR1 complex protein NPRL3 (569 aa).

Disordered stretches follow at residues 27–60 (PFQR…DQDG) and 441–476 (TPNA…SGDS). Polar residues-rich tracts occupy residues 34–52 (HPAS…NNTG) and 441–468 (TPNA…NSSA). Serine 476 is subject to Phosphoserine.

Belongs to the NPR3 family. Within the GATOR complex, component of the GATOR1 subcomplex, made of DEPDC5, NPRL2 and NPRL3. GATOR1 mediates the strong interaction of the GATOR complex with small GTPases Rag (RagA/RRAGA, RagB/RRAGB, RagC/RRAGC and/or RagD/RRAGD) heterodimers. GATOR1 interacts with GPR155/LYCHOS; interaction takes place in presence of cholesterol and prevents interaction between GATOR1 and KICSTOR.

The protein localises to the lysosome membrane. As a component of the GATOR1 complex functions as an inhibitor of the amino acid-sensing branch of the mTORC1 pathway. In response to amino acid depletion, the GATOR1 complex has GTPase activating protein (GAP) activity and strongly increases GTP hydrolysis by RagA/RRAGA (or RagB/RRAGB) within heterodimeric Rag complexes, thereby turning them into their inactive GDP-bound form, releasing mTORC1 from lysosomal surface and inhibiting mTORC1 signaling. In the presence of abundant amino acids, the GATOR1 complex is negatively regulated by GATOR2, the other GATOR subcomplex, in this amino acid-sensing branch of the TORC1 pathway. The sequence is that of GATOR1 complex protein NPRL3 from Mus musculus (Mouse).